The chain runs to 154 residues: MQSNMQLEPNFWQTKSLLEMTESEWEALCDGCGKCCYRKYIQGRSKRQKLYYTRIACNLLDVETGKCGNYSERFNIETDCTKLTKKNLPDFHWLPDTCAYRLLYEGKTLPEWHPLISGSPHSVKNADILIKNGIHERDVIDWFEFIIDEDHTFK.

This sequence belongs to the UPF0260 family.

This chain is UPF0260 protein NTHI1811, found in Haemophilus influenzae (strain 86-028NP).